The following is a 155-amino-acid chain: 6,7-dimethyl-8-ribityllumazine synthase (155 aa).

5-amino-6-(D-ribitylamino)uracil-binding positions include phenylalanine 23, 57 to 59 (AFE), and 81 to 83 (AVI). 86–87 (ST) serves as a coordination point for (2S)-2-hydroxy-3-oxobutyl phosphate. Catalysis depends on histidine 89, which acts as the Proton donor. Phenylalanine 114 contributes to the 5-amino-6-(D-ribitylamino)uracil binding site. Residue arginine 128 participates in (2S)-2-hydroxy-3-oxobutyl phosphate binding.

It belongs to the DMRL synthase family.

It catalyses the reaction (2S)-2-hydroxy-3-oxobutyl phosphate + 5-amino-6-(D-ribitylamino)uracil = 6,7-dimethyl-8-(1-D-ribityl)lumazine + phosphate + 2 H2O + H(+). It participates in cofactor biosynthesis; riboflavin biosynthesis; riboflavin from 2-hydroxy-3-oxobutyl phosphate and 5-amino-6-(D-ribitylamino)uracil: step 1/2. Catalyzes the formation of 6,7-dimethyl-8-ribityllumazine by condensation of 5-amino-6-(D-ribitylamino)uracil with 3,4-dihydroxy-2-butanone 4-phosphate. This is the penultimate step in the biosynthesis of riboflavin. In Geobacter sulfurreducens (strain ATCC 51573 / DSM 12127 / PCA), this protein is 6,7-dimethyl-8-ribityllumazine synthase.